An 808-amino-acid chain; its full sequence is Glycerol-3-phosphate acyltransferase (808 aa).

The short motif at 306–311 (HRSHMD) is the HXXXXD motif element.

This sequence belongs to the GPAT/DAPAT family.

It localises to the cell inner membrane. The enzyme catalyses sn-glycerol 3-phosphate + an acyl-CoA = a 1-acyl-sn-glycero-3-phosphate + CoA. The protein operates within phospholipid metabolism; CDP-diacylglycerol biosynthesis; CDP-diacylglycerol from sn-glycerol 3-phosphate: step 1/3. In Vibrio parahaemolyticus serotype O3:K6 (strain RIMD 2210633), this protein is Glycerol-3-phosphate acyltransferase.